The sequence spans 1901 residues: Protein TIC 214 (1901 aa).

Helical transmembrane passes span 18 to 38 (IINSVVVVGLYYGFLTTFSIG), 64 to 84 (FITGQLMMFISIYYAPLHLAL), 87 to 107 (PHTITVLALPYLLFHFFWNNH), 124 to 144 (LSIQCVFLNNLIFQLFNHFIL), 172 to 192 (VGWLIGHILFMKWLGLVLVWI), and 221 to 241 (IFSILLFITCVYYLGRIPSPI). 3 disordered regions span residues 248 to 299 (EASK…EERW), 797 to 817 (REEQTKREEKKEKDKKGENKR), and 1591 to 1618 (IQEAKEPASQGEKERGSDIENKGNLGPV). Residues 256–268 (VESEEERDVEIET) show a composition bias toward acidic residues. A compositionally biased stretch (basic and acidic residues) spans 1591–1611 (IQEAKEPASQGEKERGSDIEN).

This sequence belongs to the TIC214 family. In terms of assembly, part of the Tic complex.

It localises to the plastid. The protein resides in the chloroplast inner membrane. Its function is as follows. Involved in protein precursor import into chloroplasts. May be part of an intermediate translocation complex acting as a protein-conducting channel at the inner envelope. The protein is Protein TIC 214 of Nicotiana sylvestris (Wood tobacco).